The primary structure comprises 837 residues: Tuftelin-interacting protein 11 (837 aa).

Composition is skewed to basic and acidic residues over residues 1–13 and 53–64; these read MSLSHLYRDGEGR and VWAERDSDDERP. Disordered regions lie at residues 1–21, 53–72, and 85–133; these read MSLSHLYRDGEGRIDDDDDER, VWAERDSDDERPSFGGKRAR, and LKKG…KGFA. Residues 1–50 form a required for interaction with DHX15 region; it reads MSLSHLYRDGEGRIDDDDDERENFEITDWDLQNEFNPNRQRHWQTKEEAT. 3 positions are modified to phosphoserine: S2, S59, and S98. A compositionally biased stretch (acidic residues) spans 91–102; the sequence is EEAELEDSDDEE. Residues 103–116 show a composition bias toward basic and acidic residues; that stretch reads RPVKQDDFPKDFGP. Position 144 is a phosphoserine (S144). Residues 149 to 195 enclose the G-patch domain; sequence TKGIGQKLLQKMGYVPGRGLGKNAQGIINPIEAKQRKGKGAVGAYGS. A disordered region spans residues 179-236; that stretch reads IEAKQRKGKGAVGAYGSERTTQSMQDFPVVDSEEEAEEEFQKELSQWRKDPSGSKKKP. S210 bears the Phosphoserine mark. Residues 217 to 231 are compositionally biased toward basic and acidic residues; sequence EFQKELSQWRKDPSG. The Nuclear localization signal signature appears at 700-705; it reads VKDKFN. A required for nuclear speckle localization region spans residues 710-734; the sequence is IMNRAVSSNVGAYMQPGARENIAYL.

This sequence belongs to the TFP11/STIP family. Identified in the spliceosome C complex. Found in the Intron Large (IL) complex, a post-mRNA release spliceosomal complex containing the excised intron, U2, U5 and U6 snRNPs, and splicing factors. Interacts with TUFT1. Interacts with DHX15; indicative for a recruitment of DHX15 to the IL complex. Interacts with GCFC2.

It localises to the cytoplasm. The protein resides in the nucleus. Involved in pre-mRNA splicing, specifically in spliceosome disassembly during late-stage splicing events. Intron turnover seems to proceed through reactions in two lariat-intron associated complexes termed Intron Large (IL) and Intron Small (IS). In cooperation with DHX15 seems to mediate the transition of the U2, U5 and U6 snRNP-containing IL complex to the snRNP-free IS complex leading to efficient debranching and turnover of excised introns. May play a role in the differentiation of ameloblasts and odontoblasts or in the forming of the enamel extracellular matrix. This chain is Tuftelin-interacting protein 11 (TFIP11), found in Macaca mulatta (Rhesus macaque).